The sequence spans 150 residues: Guanine nucleotide-binding protein subunit gamma 2 (150 aa).

The span at 1–11 (MRGEANGEEEQ) shows a compositional bias: acidic residues. The interval 1 to 59 (MRGEANGEEEQQPPRRNHLRDDAEEEEEVERRAARPVSGQQQQQQRRRPTDVGGGAAMR) is disordered. Residues 65-97 (GKHRLSAAIARLDQELQSLQDELNELETMEPAS) adopt a coiled-coil conformation. Residues 71-137 (AAIARLDQEL…RWFQRVRSSR (67 aa)) enclose the G protein gamma domain.

G proteins are composed of 3 units, alpha, beta and gamma. Interacts with the beta subunit RGB1.

The protein localises to the cell membrane. Its function is as follows. Guanine nucleotide-binding proteins (G proteins) are involved as modulators or transducers in various transmembrane signaling systems. The chain is Guanine nucleotide-binding protein subunit gamma 2 from Oryza sativa subsp. indica (Rice).